Here is a 456-residue protein sequence, read N- to C-terminus: General transcription factor IIE subunit 1 (456 aa).

The region spanning 11 to 100 is the HTH TFE/IIEalpha-type domain; that stretch reads LDDLVKMVIR…LWYIDYKHII (90 aa). Residues 129 to 157 form a C4-type zinc finger; that stretch reads CQTCHKVYTALDIPKLLNMDTGALACEIC. The interval 345–402 is disordered; it reads ESAPDSGDADGNGSNSGSGGSTIEGNDGGNGEHQNKKMKLDDSQTVSSMSQSDDDGKD. The segment covering 347–357 has biased composition (low complexity); that stretch reads APDSGDADGNG. Positions 358 to 375 are enriched in gly residues; that stretch reads SNSGSGGSTIEGNDGGNG. Basic and acidic residues predominate over residues 377-386; that stretch reads HQNKKMKLDD.

The protein belongs to the TFIIE alpha subunit family. As to quaternary structure, TFIIE is a tetramer of two alpha and two beta subunits.

It is found in the nucleus. Recruits TFIIH to the initiation complex and stimulates the RNA polymerase II C-terminal domain kinase and DNA-dependent ATPase activities of TFIIH. Both TFIIH and TFIIE are required for promoter clearance by RNA polymerase. The sequence is that of General transcription factor IIE subunit 1 (gtf2e1-1) from Dictyostelium discoideum (Social amoeba).